The sequence spans 564 residues: Dihydroxy-acid dehydratase (564 aa).

A [2Fe-2S] cluster-binding site is contributed by Cys51. Asp83 contacts Mg(2+). Residue Cys124 coordinates [2Fe-2S] cluster. 2 residues coordinate Mg(2+): Asp125 and Lys126. Lys126 carries the N6-carboxylysine modification. Cys196 is a binding site for [2Fe-2S] cluster. Glu448 is a binding site for Mg(2+). Ser474 functions as the Proton acceptor in the catalytic mechanism.

Belongs to the IlvD/Edd family. As to quaternary structure, homodimer. [2Fe-2S] cluster serves as cofactor. Mg(2+) is required as a cofactor.

The enzyme catalyses (2R)-2,3-dihydroxy-3-methylbutanoate = 3-methyl-2-oxobutanoate + H2O. It catalyses the reaction (2R,3R)-2,3-dihydroxy-3-methylpentanoate = (S)-3-methyl-2-oxopentanoate + H2O. It participates in amino-acid biosynthesis; L-isoleucine biosynthesis; L-isoleucine from 2-oxobutanoate: step 3/4. Its pathway is amino-acid biosynthesis; L-valine biosynthesis; L-valine from pyruvate: step 3/4. Its function is as follows. Functions in the biosynthesis of branched-chain amino acids. Catalyzes the dehydration of (2R,3R)-2,3-dihydroxy-3-methylpentanoate (2,3-dihydroxy-3-methylvalerate) into 2-oxo-3-methylpentanoate (2-oxo-3-methylvalerate) and of (2R)-2,3-dihydroxy-3-methylbutanoate (2,3-dihydroxyisovalerate) into 2-oxo-3-methylbutanoate (2-oxoisovalerate), the penultimate precursor to L-isoleucine and L-valine, respectively. The polypeptide is Dihydroxy-acid dehydratase (Polynucleobacter asymbioticus (strain DSM 18221 / CIP 109841 / QLW-P1DMWA-1) (Polynucleobacter necessarius subsp. asymbioticus)).